The following is a 205-amino-acid chain: Small ribosomal subunit protein uS4 (205 aa).

Residues 95 to 156 (SRLDNIVYRM…KTIKIPIVKA (62 aa)) form the S4 RNA-binding domain.

It belongs to the universal ribosomal protein uS4 family. As to quaternary structure, part of the 30S ribosomal subunit. Contacts protein S5. The interaction surface between S4 and S5 is involved in control of translational fidelity.

One of the primary rRNA binding proteins, it binds directly to 16S rRNA where it nucleates assembly of the body of the 30S subunit. In terms of biological role, with S5 and S12 plays an important role in translational accuracy. This is Small ribosomal subunit protein uS4 from Mycoplasma pneumoniae (strain ATCC 29342 / M129 / Subtype 1) (Mycoplasmoides pneumoniae).